Here is a 151-residue protein sequence, read N- to C-terminus: Small heat shock protein HspD (151 aa).

The sHSP domain occupies 28–138 (RATEDNYPPY…KPRRIAINGA (111 aa)).

It belongs to the small heat shock protein (HSP20) family.

The sequence is that of Small heat shock protein HspD (hspD) from Bradyrhizobium diazoefficiens (strain JCM 10833 / BCRC 13528 / IAM 13628 / NBRC 14792 / USDA 110).